The sequence spans 207 residues: Probable nicotinate-nucleotide adenylyltransferase (207 aa).

This sequence belongs to the NadD family.

It carries out the reaction nicotinate beta-D-ribonucleotide + ATP + H(+) = deamido-NAD(+) + diphosphate. Its pathway is cofactor biosynthesis; NAD(+) biosynthesis; deamido-NAD(+) from nicotinate D-ribonucleotide: step 1/1. Its function is as follows. Catalyzes the reversible adenylation of nicotinate mononucleotide (NaMN) to nicotinic acid adenine dinucleotide (NaAD). This is Probable nicotinate-nucleotide adenylyltransferase from Synechococcus sp. (strain JA-3-3Ab) (Cyanobacteria bacterium Yellowstone A-Prime).